Reading from the N-terminus, the 102-residue chain is Large ribosomal subunit protein bL21 (102 aa).

It belongs to the bacterial ribosomal protein bL21 family. Part of the 50S ribosomal subunit. Contacts protein L20.

This protein binds to 23S rRNA in the presence of protein L20. This chain is Large ribosomal subunit protein bL21, found in Bifidobacterium longum subsp. infantis (strain ATCC 15697 / DSM 20088 / JCM 1222 / NCTC 11817 / S12).